A 377-amino-acid polypeptide reads, in one-letter code: Queuine tRNA-ribosyltransferase (377 aa).

Catalysis depends on aspartate 94, which acts as the Proton acceptor. Residues 94–98 (DSGGF), aspartate 148, glutamine 191, and glycine 218 each bind substrate. Residues 249 to 255 (GVGTPDD) form an RNA binding region. The active-site Nucleophile is aspartate 268. The interval 273–277 (TRAGR) is RNA binding; important for wobble base 34 recognition.

It belongs to the queuine tRNA-ribosyltransferase family. Homodimer. Within each dimer, one monomer is responsible for RNA recognition and catalysis, while the other monomer binds to the replacement base PreQ1.

The enzyme catalyses 7-aminomethyl-7-carbaguanine + guanosine(34) in tRNA = 7-aminomethyl-7-carbaguanosine(34) in tRNA + guanine. It participates in tRNA modification; tRNA-queuosine biosynthesis. In terms of biological role, catalyzes the base-exchange of a guanine (G) residue with the queuine precursor 7-aminomethyl-7-deazaguanine (PreQ1) at position 34 (anticodon wobble position) in tRNAs with GU(N) anticodons (tRNA-Asp, -Asn, -His and -Tyr). Catalysis occurs through a double-displacement mechanism. The nucleophile active site attacks the C1' of nucleotide 34 to detach the guanine base from the RNA, forming a covalent enzyme-RNA intermediate. The proton acceptor active site deprotonates the incoming PreQ1, allowing a nucleophilic attack on the C1' of the ribose to form the product. After dissociation, two additional enzymatic reactions on the tRNA convert PreQ1 to queuine (Q), resulting in the hypermodified nucleoside queuosine (7-(((4,5-cis-dihydroxy-2-cyclopenten-1-yl)amino)methyl)-7-deazaguanosine). The polypeptide is Queuine tRNA-ribosyltransferase (Brucella melitensis biotype 1 (strain ATCC 23456 / CCUG 17765 / NCTC 10094 / 16M)).